Reading from the N-terminus, the 56-residue chain is Ovomucoid (56 aa).

One can recognise a Kazal-like domain in the interval valine 6 to cysteine 56. Intrachain disulfides connect cysteine 8-cysteine 38, cysteine 16-cysteine 35, and cysteine 24-cysteine 56. Asparagine 45 is a glycosylation site (N-linked (GlcNAc...) asparagine).

The protein resides in the secreted. This Pipile pipile (Trinidad piping guan) protein is Ovomucoid.